The sequence spans 342 residues: UDP-N-acetylglucosamine--N-acetylmuramyl-(pentapeptide) pyrophosphoryl-undecaprenol N-acetylglucosamine transferase (342 aa).

Residues 10–12, N124, S177, and Q275 each bind UDP-N-acetyl-alpha-D-glucosamine; that span reads TGG.

The protein belongs to the glycosyltransferase 28 family. MurG subfamily.

It localises to the cell inner membrane. The enzyme catalyses di-trans,octa-cis-undecaprenyl diphospho-N-acetyl-alpha-D-muramoyl-L-alanyl-D-glutamyl-meso-2,6-diaminopimeloyl-D-alanyl-D-alanine + UDP-N-acetyl-alpha-D-glucosamine = di-trans,octa-cis-undecaprenyl diphospho-[N-acetyl-alpha-D-glucosaminyl-(1-&gt;4)]-N-acetyl-alpha-D-muramoyl-L-alanyl-D-glutamyl-meso-2,6-diaminopimeloyl-D-alanyl-D-alanine + UDP + H(+). Its pathway is cell wall biogenesis; peptidoglycan biosynthesis. Functionally, cell wall formation. Catalyzes the transfer of a GlcNAc subunit on undecaprenyl-pyrophosphoryl-MurNAc-pentapeptide (lipid intermediate I) to form undecaprenyl-pyrophosphoryl-MurNAc-(pentapeptide)GlcNAc (lipid intermediate II). This chain is UDP-N-acetylglucosamine--N-acetylmuramyl-(pentapeptide) pyrophosphoryl-undecaprenol N-acetylglucosamine transferase, found in Campylobacter jejuni subsp. jejuni serotype O:6 (strain 81116 / NCTC 11828).